We begin with the raw amino-acid sequence, 343 residues long: MAEQLTITAPDDWHVHLRDEEMLERVVAYTARCFRRAIVMPNLRPPVTTVDAARSYRDRILSACPEGVAFTPLMTAYLTDNSDPDDLERGFQEGVYTAAKLYPANATTNSAAGVTDLDQIGRVLSRMEAIGMPLLIHGEVTDADVDVFDREAVFIERHLKSLRTRHPELKVVFEHITTEQAVDYVGSSDRNLAATITPHHLQINRNSMFLGGLRSDFYCLPVVKRERHRLALRRAATSGDPRFFLGTDSAPHPRAGKETSCGCAGIFNAPFALESYAQVFAEEEAMHHLEGFASLHGPAFYGLPANNDTVTLEKVAVDVPELVNGLVPFHAGETLPWRLQPCM.

Residues His14 and His16 each contribute to the Zn(2+) site. Substrate contacts are provided by residues 16-18 (HLR) and Asn42. Residues Lys100, His137, and His175 each contribute to the Zn(2+) site. The residue at position 100 (Lys100) is an N6-carboxylysine. A substrate-binding site is contributed by His137. Leu220 contributes to the substrate binding site. Residue Asp248 participates in Zn(2+) binding. Residue Asp248 is part of the active site. Substrate-binding residues include His252 and Ala264.

Belongs to the metallo-dependent hydrolases superfamily. DHOase family. Class II DHOase subfamily. As to quaternary structure, homodimer. It depends on Zn(2+) as a cofactor.

It catalyses the reaction (S)-dihydroorotate + H2O = N-carbamoyl-L-aspartate + H(+). It participates in pyrimidine metabolism; UMP biosynthesis via de novo pathway; (S)-dihydroorotate from bicarbonate: step 3/3. Its function is as follows. Catalyzes the reversible cyclization of carbamoyl aspartate to dihydroorotate. This is Dihydroorotase from Parasynechococcus marenigrum (strain WH8102).